The chain runs to 502 residues: Lysine--tRNA ligase (502 aa).

Positions 403 and 410 each coordinate Mg(2+).

This sequence belongs to the class-II aminoacyl-tRNA synthetase family. As to quaternary structure, homodimer. Mg(2+) serves as cofactor.

The protein localises to the cytoplasm. It catalyses the reaction tRNA(Lys) + L-lysine + ATP = L-lysyl-tRNA(Lys) + AMP + diphosphate. This is Lysine--tRNA ligase from Synechococcus sp. (strain CC9902).